The following is a 666-amino-acid chain: Probable potassium transport system protein Kup (666 aa).

12 helical membrane passes run 16–36 (GFII…LYTM), 58–78 (ISLI…LIAL), 100–120 (PWLI…GALT), 141–161 (IYQN…VLFG), 165–185 (FGTG…FSFL), 221–241 (IFIL…YSDL), 253–273 (WPFV…WILA), 294–314 (VYLV…LISG), 343–363 (LYIP…VLAF), 373–393 (YGLA…YYLI), 399–419 (PILA…FFLA), and 424–444 (FMHG…VMFI).

Belongs to the HAK/KUP transporter (TC 2.A.72) family.

Its subcellular location is the cell membrane. The catalysed reaction is K(+)(in) + H(+)(in) = K(+)(out) + H(+)(out). In terms of biological role, transport of potassium into the cell. Likely operates as a K(+):H(+) symporter. The sequence is that of Probable potassium transport system protein Kup from Streptococcus pyogenes serotype M49 (strain NZ131).